The primary structure comprises 642 residues: Putative ATP-binding protein YdiF (642 aa).

2 consecutive ABC transporter domains span residues 4 to 259 and 327 to 541; these read LQVN…EKDL and LRVQ…ELEK. Residues 36–43 and 360–367 each bind ATP; these read GRNGAGKS and GPNGIGKS. Composition is skewed to basic and acidic residues over residues 541-550 and 557-567; these read KMNQQEETDK and SDSKRSYEEEK. The interval 541-567 is disordered; sequence KMNQQEETDKTPATVKSDSKRSYEEEK.

The protein belongs to the ABC transporter superfamily. ABCF family. YdiF subfamily.

This is Putative ATP-binding protein YdiF (ydiF) from Bacillus subtilis (strain 168).